The sequence spans 194 residues: NADH-quinone oxidoreductase subunit B (194 aa).

[4Fe-4S] cluster contacts are provided by Cys73, Cys74, Cys138, and Cys168.

This sequence belongs to the complex I 20 kDa subunit family. NDH-1 is composed of 14 different subunits. Subunits NuoB, C, D, E, F, and G constitute the peripheral sector of the complex. Requires [4Fe-4S] cluster as cofactor.

The protein localises to the cell inner membrane. It catalyses the reaction a quinone + NADH + 5 H(+)(in) = a quinol + NAD(+) + 4 H(+)(out). In terms of biological role, NDH-1 shuttles electrons from NADH, via FMN and iron-sulfur (Fe-S) centers, to quinones in the respiratory chain. The immediate electron acceptor for the enzyme in this species is believed to be ubiquinone. Couples the redox reaction to proton translocation (for every two electrons transferred, four hydrogen ions are translocated across the cytoplasmic membrane), and thus conserves the redox energy in a proton gradient. The sequence is that of NADH-quinone oxidoreductase subunit B from Bradyrhizobium sp. (strain BTAi1 / ATCC BAA-1182).